The primary structure comprises 249 residues: Pyridoxine 5'-phosphate synthase (249 aa).

A 3-amino-2-oxopropyl phosphate-binding site is contributed by asparagine 7. Aspartate 9–histidine 10 is a binding site for 1-deoxy-D-xylulose 5-phosphate. Arginine 18 is a binding site for 3-amino-2-oxopropyl phosphate. The Proton acceptor role is filled by histidine 43. Residues arginine 45 and histidine 50 each coordinate 1-deoxy-D-xylulose 5-phosphate. The active-site Proton acceptor is glutamate 70. Threonine 100 contacts 1-deoxy-D-xylulose 5-phosphate. Histidine 190 (proton donor) is an active-site residue. 3-amino-2-oxopropyl phosphate-binding positions include glycine 191 and glycine 212 to histidine 213.

Belongs to the PNP synthase family. Homooctamer; tetramer of dimers.

Its subcellular location is the cytoplasm. The catalysed reaction is 3-amino-2-oxopropyl phosphate + 1-deoxy-D-xylulose 5-phosphate = pyridoxine 5'-phosphate + phosphate + 2 H2O + H(+). Its pathway is cofactor biosynthesis; pyridoxine 5'-phosphate biosynthesis; pyridoxine 5'-phosphate from D-erythrose 4-phosphate: step 5/5. Its function is as follows. Catalyzes the complicated ring closure reaction between the two acyclic compounds 1-deoxy-D-xylulose-5-phosphate (DXP) and 3-amino-2-oxopropyl phosphate (1-amino-acetone-3-phosphate or AAP) to form pyridoxine 5'-phosphate (PNP) and inorganic phosphate. The chain is Pyridoxine 5'-phosphate synthase from Synechococcus sp. (strain CC9311).